The sequence spans 351 residues: N-acetyl-gamma-glutamyl-phosphate reductase (351 aa).

Residue cysteine 154 is part of the active site.

Belongs to the NAGSA dehydrogenase family. Type 1 subfamily.

Its subcellular location is the cytoplasm. It catalyses the reaction N-acetyl-L-glutamate 5-semialdehyde + phosphate + NADP(+) = N-acetyl-L-glutamyl 5-phosphate + NADPH + H(+). The protein operates within amino-acid biosynthesis; L-arginine biosynthesis; N(2)-acetyl-L-ornithine from L-glutamate: step 3/4. Functionally, catalyzes the NADPH-dependent reduction of N-acetyl-5-glutamyl phosphate to yield N-acetyl-L-glutamate 5-semialdehyde. The polypeptide is N-acetyl-gamma-glutamyl-phosphate reductase (Prochlorococcus marinus (strain MIT 9312)).